Reading from the N-terminus, the 425-residue chain is Histidine--tRNA ligase (425 aa).

It belongs to the class-II aminoacyl-tRNA synthetase family. Homodimer.

It is found in the cytoplasm. The enzyme catalyses tRNA(His) + L-histidine + ATP = L-histidyl-tRNA(His) + AMP + diphosphate + H(+). The protein is Histidine--tRNA ligase of Tolumonas auensis (strain DSM 9187 / NBRC 110442 / TA 4).